Consider the following 320-residue polypeptide: tRNA N6-adenosine threonylcarbamoyltransferase (320 aa).

Positions 114 and 118 each coordinate Fe cation. Substrate-binding positions include 136 to 140 (VVSGG), Asp-169, Gly-182, Asp-186, and Asn-273. Asp-297 is a binding site for Fe cation.

It belongs to the KAE1 / TsaD family. Fe(2+) is required as a cofactor.

It is found in the cytoplasm. It carries out the reaction L-threonylcarbamoyladenylate + adenosine(37) in tRNA = N(6)-L-threonylcarbamoyladenosine(37) in tRNA + AMP + H(+). Functionally, required for the formation of a threonylcarbamoyl group on adenosine at position 37 (t(6)A37) in tRNAs that read codons beginning with adenine. Is involved in the transfer of the threonylcarbamoyl moiety of threonylcarbamoyl-AMP (TC-AMP) to the N6 group of A37, together with TsaE and TsaB. TsaD likely plays a direct catalytic role in this reaction. The sequence is that of tRNA N6-adenosine threonylcarbamoyltransferase from Ureaplasma parvum serovar 3 (strain ATCC 27815 / 27 / NCTC 11736).